We begin with the raw amino-acid sequence, 220 residues long: Miraculin (220 aa).

The first 29 residues, 1-29 (MKELTMLSLSFFFVSALLAAAANPLLSAA), serve as a signal peptide directing secretion. N71 carries N-linked (GlcNAc...) asparagine glycosylation. Intrachain disulfides connect C76-C121, C177-C188, and C181-C184. A glycan (N-linked (GlcNAc...) asparagine) is linked at N215.

This sequence belongs to the protease inhibitor I3 (leguminous Kunitz-type inhibitor) family. In terms of assembly, homotetramer; dimer of homodimer. In terms of processing, glycosylated; contains as much as 13,9% of sugars (glucosamine, mannose, galactose, xylose, and fucose). Expressed in fruit pulp after pollination. Not expressed in seeds, stems or leaves.

Its function is as follows. Miraculin has the property of modifying a sour taste into a sweet taste. This alteration of taste perception persists for many minutes. The polypeptide is Miraculin (Synsepalum dulcificum (Miracle fruit)).